The sequence spans 157 residues: Large ribosomal subunit protein uL3 (157 aa).

Residues 57 to 98 (GKGFAGSIKRHNQSRGPESHGSRYHRRPGSMGPIKGKLKGKK) form a disordered region.

Belongs to the universal ribosomal protein uL3 family. As to quaternary structure, part of the 50S ribosomal subunit. Forms a cluster with proteins L14 and L19.

Its function is as follows. One of the primary rRNA binding proteins, it binds directly near the 3'-end of the 23S rRNA, where it nucleates assembly of the 50S subunit. In Onion yellows phytoplasma (strain OY-M), this protein is Large ribosomal subunit protein uL3 (rplC).